Consider the following 333-residue polypeptide: Anthranilate phosphoribosyltransferase (333 aa).

5-phospho-alpha-D-ribose 1-diphosphate contacts are provided by residues G80, 83-84, T88, 90-93, 108-116, and S120; these read GD, NLST, and KHGNRSASG. G80 provides a ligand contact to anthranilate. S92 is a binding site for Mg(2+). N111 is a binding site for anthranilate. An anthranilate-binding site is contributed by R166. Residues D224 and E225 each contribute to the Mg(2+) site.

It belongs to the anthranilate phosphoribosyltransferase family. As to quaternary structure, homodimer. The cofactor is Mg(2+).

It carries out the reaction N-(5-phospho-beta-D-ribosyl)anthranilate + diphosphate = 5-phospho-alpha-D-ribose 1-diphosphate + anthranilate. The protein operates within amino-acid biosynthesis; L-tryptophan biosynthesis; L-tryptophan from chorismate: step 2/5. Functionally, catalyzes the transfer of the phosphoribosyl group of 5-phosphorylribose-1-pyrophosphate (PRPP) to anthranilate to yield N-(5'-phosphoribosyl)-anthranilate (PRA). In Pyrobaculum aerophilum (strain ATCC 51768 / DSM 7523 / JCM 9630 / CIP 104966 / NBRC 100827 / IM2), this protein is Anthranilate phosphoribosyltransferase.